The sequence spans 96 residues: Evasin P1078 (96 aa).

The first 28 residues, 1-28 (MAFNTITFLQWAVFVAILFNMNLHSASA), serve as a signal peptide directing secretion. Intrachain disulfides connect Cys-48-Cys-67, Cys-52-Cys-69, and Cys-63-Cys-80. A glycan (N-linked (GlcNAc...) asparagine) is linked at Asn-51. An N-linked (GlcNAc...) asparagine glycan is attached at Asn-74.

Its subcellular location is the secreted. Functionally, salivary chemokine-binding protein which binds to host chemokines CXCL1, CXCL2, CXCL3, CXCL5, CXCL6, CXCL11 and CXCL13. The chain is Evasin P1078 from Ixodes ricinus (Common tick).